Here is a 117-residue protein sequence, read N- to C-terminus: Photosystem II reaction center Psb28 protein (117 aa).

Belongs to the Psb28 family. In terms of assembly, part of the photosystem II complex.

It localises to the cellular thylakoid membrane. This chain is Photosystem II reaction center Psb28 protein, found in Prochlorococcus marinus (strain MIT 9215).